Here is a 573-residue protein sequence, read N- to C-terminus: MAFNFNWSPLMADAGFYTRAQDLLTAALNKSPKPPIIVDDIAVTELNLGSIPPELEILEVGDLAEDRFRGIFKMSYSGDAFLTLKTRVQANPLNTFLITRPAYASPKPLAAASGLTIPLQITLSNFRLSGFVVLVFSKQKGITVVFRNDPLESLKVSSTFDSIPSVRDYLQREIEGQLRILFMDELPAIIHRLSLRLWVPEYRGLEAGIPETAIPSSLGPGEDTLLNPPKDPVDASGNLLSSAEIASLSLDSGVEMHSLFSQKNLLRLAALTNSQRTLSLFTPSIREVMFRARTGLADQGEGLGSGLMSPGSPALSRTHSHISSPLSSFQDSSSVLSLQQRSTTAASSFSGYGLSLGAGRHTKARPTKKRKKRVVDLRKQSKPTDPEITSADGGYTETSTASTTFSSSTVPEEVNDDPVTPPLSPETTIRFPNRQHRFSTSEGKVIARAPAQQLTYSEPSHSALHTQTANPVPAVPLHAEGAAVPPQQALVFGDEHLGSREKSMEAQSSHGPNPGLSITDAAPNSSILEQAWMMKMANEIARRIQEQNSLVNNNYPGPWEQTRARTPPPAYGQ.

The SMP-LTD domain maps to 1–195; it reads MAFNFNWSPL…LPAIIHRLSL (195 aa). Disordered stretches follow at residues 301 to 326, 349 to 433, 499 to 521, and 550 to 573; these read EGLG…SSPL, FSGY…RFPN, SREK…ITDA, and LVNN…AYGQ. Over residues 306–316 the composition is skewed to low complexity; the sequence is GLMSPGSPALS. A compositionally biased stretch (basic residues) spans 360–373; the sequence is RHTKARPTKKRKKR. The segment covering 374 to 385 has biased composition (basic and acidic residues); it reads VVDLRKQSKPTD. The span at 396–409 shows a compositional bias: low complexity; sequence TETSTASTTFSSST.

This sequence belongs to the MDM34 family. Component of the ER-mitochondria encounter structure (ERMES) or MDM complex, composed of MMM1, MDM10, MDM12 and MDM34.

Its subcellular location is the mitochondrion outer membrane. In terms of biological role, component of the ERMES/MDM complex, which serves as a molecular tether to connect the endoplasmic reticulum (ER) and mitochondria. Components of this complex are involved in the control of mitochondrial shape and protein biogenesis, and function in nonvesicular lipid trafficking between the ER and mitochondria. MDM34 is required for the interaction of the ER-resident membrane protein MMM1 and the outer mitochondrial membrane-resident beta-barrel protein MDM10. This is Mitochondrial distribution and morphology protein 34 from Uncinocarpus reesii (strain UAMH 1704).